Consider the following 346-residue polypeptide: fMet-Leu-Phe receptor (346 aa).

N-linked (GlcNAc...) asparagine glycosylation is found at Asn-1 and Asn-7. Topologically, residues 1-24 (NSSLPTNISGGTPAVSAGYLFLDI) are extracellular. The chain crosses the membrane as a helical span at residues 25-47 (ITYLVFAVTFVLGVLGNGLVIWV). The Cytoplasmic segment spans residues 48–58 (AGFRMRHTVTT). The helical transmembrane segment at 59-80 (ISYLNLAVADFCFTSTLPFLMV) threads the bilayer. At 81–97 (VKVMRGHWPFGWFLCKF) the chain is on the extracellular side. The cysteines at positions 95 and 173 are disulfide-linked. Residues 98 to 118 (IFTIVDINLFGSVFLIALIAL) form a helical membrane-spanning segment. At 119–137 (DRCVCVLHPVWTQNHRTVS) the chain is on the cytoplasmic side. A helical membrane pass occupies residues 138–159 (LAKKVIIGPWVMALLLTLPVII). The Extracellular portion of the chain corresponds to 160-202 (RVTTVPGKTGTVACTFDFSPWTNDPVEKLKVTIAMLTVRGIIR). Residues 203–223 (FIIGFSVPMSIVAVSYGLIAT) traverse the membrane as a helical segment. The Cytoplasmic portion of the chain corresponds to 224–239 (KIHKQGLIKSSRPLRV). Residues 240–263 (LSFVVAAFFLCWSPYQVVAFIATV) traverse the membrane as a helical segment. The Extracellular portion of the chain corresponds to 264–282 (RLRNILQGLSKELRIAVDA). Residues 283 to 302 (TSALAFFNSCLNPMLYVFMG) form a helical membrane-spanning segment. The Cytoplasmic portion of the chain corresponds to 303-346 (QDFRERLIHSLPTSLERALTEDSAQTSDTATNSTLPSAEVPLQA). A disordered region spans residues 321-346 (LTEDSAQTSDTATNSTLPSAEVPLQA). The segment covering 324–338 (DSAQTSDTATNSTLP) has biased composition (polar residues).

The protein belongs to the G-protein coupled receptor 1 family. In terms of processing, phosphorylated; which is necessary for desensitization.

Its subcellular location is the cell membrane. In terms of biological role, high affinity receptor for N-formyl-methionyl peptides (fMLP), which are powerful neutrophil chemotactic factors. Binding of fMLP to the receptor stimulates intracellular calcium mobilization and superoxide anion release. This response is mediated via a G-protein that activates a phosphatidylinositol-calcium second messenger system. Receptor for TAFA4, mediates its effects on chemoattracting macrophages, promoting phagocytosis and increasing ROS release. Receptor for cathepsin CTSG, leading to increased phagocyte chemotaxis. The polypeptide is fMet-Leu-Phe receptor (FPR1) (Macaca mulatta (Rhesus macaque)).